The sequence spans 87 residues: Keratin-associated protein 19-3 (87 aa).

Residues 9 to 82 form a 23 X 2 AA repeats of G-[YCGS] region; the sequence is GGLGYGYGSF…RRPSCCGGYG (74 aa).

Belongs to the KRTAP type 19 family. In terms of assembly, interacts with hair keratins. Strong expression in narrowly defined pattern restricted to the lower and middle cortical regions of the hair shaft in both developing and cycling hair. During hair follicle regression (catagen), expression levels decrease until expression is no longer detectable in follicles at resting stage (telogen).

Its function is as follows. In the hair cortex, hair keratin intermediate filaments are embedded in an interfilamentous matrix, consisting of hair keratin-associated proteins (KRTAP), which are essential for the formation of a rigid and resistant hair shaft through their extensive disulfide bond cross-linking with abundant cysteine residues of hair keratins. The matrix proteins include the high-sulfur and high-glycine-tyrosine keratins. The sequence is that of Keratin-associated protein 19-3 (Krtap19-3) from Mus musculus (Mouse).